A 66-amino-acid polypeptide reads, in one-letter code: UPF0150 protein AF_0072.1 (66 aa).

This sequence belongs to the UPF0150 family.

The polypeptide is UPF0150 protein AF_0072.1 (Archaeoglobus fulgidus (strain ATCC 49558 / DSM 4304 / JCM 9628 / NBRC 100126 / VC-16)).